The primary structure comprises 306 residues: uncharacterized protein (306 aa).

The protein to L.delbrueckii similar ORF in glnA 5'region.

This is an uncharacterized protein from Lactobacillus delbrueckii subsp. bulgaricus.